The sequence spans 470 residues: Glucose-1-phosphate adenylyltransferase (470 aa).

Alpha-D-glucose 1-phosphate-binding positions include glycine 164, 181–182 (EK), and serine 199.

It belongs to the bacterial/plant glucose-1-phosphate adenylyltransferase family. As to quaternary structure, homotetramer.

It carries out the reaction alpha-D-glucose 1-phosphate + ATP + H(+) = ADP-alpha-D-glucose + diphosphate. It functions in the pathway glycan biosynthesis; glycogen biosynthesis. In terms of biological role, involved in the biosynthesis of ADP-glucose, a building block required for the elongation reactions to produce glycogen. Catalyzes the reaction between ATP and alpha-D-glucose 1-phosphate (G1P) to produce pyrophosphate and ADP-Glc. The chain is Glucose-1-phosphate adenylyltransferase from Pseudarthrobacter chlorophenolicus (strain ATCC 700700 / DSM 12829 / CIP 107037 / JCM 12360 / KCTC 9906 / NCIMB 13794 / A6) (Arthrobacter chlorophenolicus).